The sequence spans 232 residues: Clarin-1 (232 aa).

The helical transmembrane segment at 8–28 (IIFCMAGVLSFLCALGVVTAV) threads the bilayer. Asn48 carries N-linked (GlcNAc...) asparagine glycosylation. Helical transmembrane passes span 101 to 121 (IILF…FFMY) and 135 to 155 (LGLY…MILF). Asn184 carries an N-linked (GlcNAc...) asparagine glycan. A helical transmembrane segment spans residues 186 to 206 (TTSFWVVFICFFVHFLNGLLI).

Belongs to the clarin family.

The protein resides in the cell membrane. Its function is as follows. May have a role in the excitatory ribbon synapse junctions between hair cells and cochlear ganglion cells and presumably also in analogous synapses within the retina. The chain is Clarin-1 (Clrn1) from Mus musculus (Mouse).